The primary structure comprises 256 residues: Low molecular mass lipoprotein 3 (256 aa).

An N-terminal signal peptide occupies residues Met1 to Ala17.

This sequence belongs to the 30 kDa lipoprotein family. In terms of tissue distribution, detected in larval hemolymph (at protein level).

The protein resides in the secreted. This Bombyx mori (Silk moth) protein is Low molecular mass lipoprotein 3.